We begin with the raw amino-acid sequence, 464 residues long: Siroheme synthase (464 aa).

The tract at residues 1-203 is precorrin-2 dehydrogenase /sirohydrochlorin ferrochelatase; sequence MEFLPLFHNL…GQGAEAERLL (203 aa). NAD(+)-binding positions include 22–23 and 43–44; these read EI and PE. Serine 128 is subject to Phosphoserine. Residues 216-464 form a uroporphyrinogen-III C-methyltransferase region; sequence GEVYLVGAGP…AWFEGAQATL (249 aa). S-adenosyl-L-methionine is bound at residue proline 225. Residue aspartate 248 is the Proton acceptor of the active site. The active-site Proton donor is lysine 270. S-adenosyl-L-methionine-binding positions include 301-303, isoleucine 306, 331-332, methionine 383, and glycine 412; these read GGD and TA.

This sequence in the N-terminal section; belongs to the precorrin-2 dehydrogenase / sirohydrochlorin ferrochelatase family. It in the C-terminal section; belongs to the precorrin methyltransferase family.

The catalysed reaction is uroporphyrinogen III + 2 S-adenosyl-L-methionine = precorrin-2 + 2 S-adenosyl-L-homocysteine + H(+). The enzyme catalyses precorrin-2 + NAD(+) = sirohydrochlorin + NADH + 2 H(+). It carries out the reaction siroheme + 2 H(+) = sirohydrochlorin + Fe(2+). Its pathway is cofactor biosynthesis; adenosylcobalamin biosynthesis; precorrin-2 from uroporphyrinogen III: step 1/1. The protein operates within cofactor biosynthesis; adenosylcobalamin biosynthesis; sirohydrochlorin from precorrin-2: step 1/1. It functions in the pathway porphyrin-containing compound metabolism; siroheme biosynthesis; precorrin-2 from uroporphyrinogen III: step 1/1. It participates in porphyrin-containing compound metabolism; siroheme biosynthesis; siroheme from sirohydrochlorin: step 1/1. Its pathway is porphyrin-containing compound metabolism; siroheme biosynthesis; sirohydrochlorin from precorrin-2: step 1/1. Multifunctional enzyme that catalyzes the SAM-dependent methylations of uroporphyrinogen III at position C-2 and C-7 to form precorrin-2 via precorrin-1. Then it catalyzes the NAD-dependent ring dehydrogenation of precorrin-2 to yield sirohydrochlorin. Finally, it catalyzes the ferrochelation of sirohydrochlorin to yield siroheme. This is Siroheme synthase from Pseudomonas syringae pv. tomato (strain ATCC BAA-871 / DC3000).